Consider the following 148-residue polypeptide: Probable glycine cleavage system H protein 2 (148 aa).

The region spanning 32 to 114 is the Lipoyl-binding domain; sequence VIVVGITDIA…YGKGWLVKMK (83 aa). An N6-lipoyllysine modification is found at Lys73.

Belongs to the GcvH family. As to quaternary structure, the glycine cleavage system is composed of four proteins: P, T, L and H. (R)-lipoate is required as a cofactor.

In terms of biological role, the glycine cleavage system catalyzes the degradation of glycine. The H protein shuttles the methylamine group of glycine from the P protein to the T protein. The protein is Probable glycine cleavage system H protein 2 of Sulfurisphaera tokodaii (strain DSM 16993 / JCM 10545 / NBRC 100140 / 7) (Sulfolobus tokodaii).